Reading from the N-terminus, the 447-residue chain is Guanine nucleotide-binding protein alpha-1 subunit (447 aa).

Residue glycine 2 is the site of N-myristoyl glycine attachment. Residue cysteine 3 is the site of S-palmitoyl cysteine attachment. A G-alpha domain is found at asparagine 40 to leucine 447. Residues lysine 43–threonine 56 form a G1 motif region. GTP is bound by residues glutamate 51, serine 52, glycine 53, lysine 54, serine 55, threonine 56, leucine 269, threonine 275, glycine 297, asparagine 363, lysine 364, aspartate 366, and alanine 419. Mg(2+) is bound at residue serine 55. The interval aspartate 267–threonine 275 is G2 motif. Threonine 275 is a Mg(2+) binding site. The segment at phenylalanine 290–arginine 299 is G3 motif. The G4 motif stretch occupies residues isoleucine 359–aspartate 366. The interval threonine 417–threonine 422 is G5 motif.

It belongs to the G-alpha family. In terms of assembly, g proteins are composed of 3 units; alpha, beta and gamma. The alpha chain contains the guanine nucleotide binding site. It depends on Mg(2+) as a cofactor.

In terms of biological role, guanine nucleotide-binding proteins (G proteins) are involved as modulators or transducers in various transmembrane signaling systems. This protein is involved in the mating response pathway. In Kluyveromyces lactis (strain ATCC 8585 / CBS 2359 / DSM 70799 / NBRC 1267 / NRRL Y-1140 / WM37) (Yeast), this protein is Guanine nucleotide-binding protein alpha-1 subunit (GPA1).